The primary structure comprises 42 residues: Large ribosomal subunit protein bL34c (42 aa).

It belongs to the bacterial ribosomal protein bL34 family.

It localises to the plastid. The protein resides in the chloroplast. The protein is Large ribosomal subunit protein bL34c (rpl34) of Olisthodiscus luteus (Marine phytoflagellate).